The sequence spans 238 residues: ATP synthase subunit a (238 aa).

Transmembrane regions (helical) follow at residues 18–38 (LTLL…VFWA), 76–96 (YSLL…LGLF), 114–134 (NLAF…IEGV), 166–186 (SLAI…GLIV), and 193–213 (VYWW…SVFI).

It belongs to the ATPase A chain family. As to quaternary structure, F-type ATPases have 2 components, CF(1) - the catalytic core - and CF(0) - the membrane proton channel. CF(1) has five subunits: alpha(3), beta(3), gamma(1), delta(1), epsilon(1). CF(0) has three main subunits: a(1), b(2) and c(9-12). The alpha and beta chains form an alternating ring which encloses part of the gamma chain. CF(1) is attached to CF(0) by a central stalk formed by the gamma and epsilon chains, while a peripheral stalk is formed by the delta and b chains.

Its subcellular location is the cell membrane. Key component of the proton channel; it plays a direct role in the translocation of protons across the membrane. This is ATP synthase subunit a from Streptococcus pyogenes serotype M1.